Here is a 187-residue protein sequence, read N- to C-terminus: Large ribosomal subunit protein uL5 (187 aa).

Belongs to the universal ribosomal protein uL5 family. In terms of assembly, part of the 50S ribosomal subunit; part of the 5S rRNA/L5/L18/L25 subcomplex. Contacts the 5S rRNA and the P site tRNA. Forms a bridge to the 30S subunit in the 70S ribosome.

Functionally, this is one of the proteins that bind and probably mediate the attachment of the 5S RNA into the large ribosomal subunit, where it forms part of the central protuberance. In the 70S ribosome it contacts protein S13 of the 30S subunit (bridge B1b), connecting the 2 subunits; this bridge is implicated in subunit movement. Contacts the P site tRNA; the 5S rRNA and some of its associated proteins might help stabilize positioning of ribosome-bound tRNAs. This chain is Large ribosomal subunit protein uL5, found in Mycobacterium bovis (strain BCG / Tokyo 172 / ATCC 35737 / TMC 1019).